Here is a 129-residue protein sequence, read N- to C-terminus: Small ribosomal subunit protein uS8 (129 aa).

This sequence belongs to the universal ribosomal protein uS8 family. As to quaternary structure, part of the 30S ribosomal subunit. Contacts proteins S5 and S12.

One of the primary rRNA binding proteins, it binds directly to 16S rRNA central domain where it helps coordinate assembly of the platform of the 30S subunit. The sequence is that of Small ribosomal subunit protein uS8 from Spiroplasma kunkelii.